The primary structure comprises 131 residues: Transcription antitermination protein NusB (131 aa).

The protein belongs to the NusB family.

Functionally, involved in transcription antitermination. Required for transcription of ribosomal RNA (rRNA) genes. Binds specifically to the boxA antiterminator sequence of the ribosomal RNA (rrn) operons. In Agathobacter rectalis (strain ATCC 33656 / DSM 3377 / JCM 17463 / KCTC 5835 / VPI 0990) (Eubacterium rectale), this protein is Transcription antitermination protein NusB.